We begin with the raw amino-acid sequence, 301 residues long: Dihydroorotate dehydrogenase B (NAD(+)), catalytic subunit (301 aa).

Substrate is bound by residues K44, 68–72 (NAMGL), and N122. 44 to 45 (KS) is a binding site for FMN. N122 is an FMN binding site. The active-site Nucleophile is the C125. Positions 160 and 186 each coordinate FMN. Residue 187–188 (NT) participates in substrate binding. Residues G212, 238 to 239 (GG), and 260 to 261 (GS) contribute to the FMN site.

It belongs to the dihydroorotate dehydrogenase family. Type 1 subfamily. Heterotetramer of 2 PyrK and 2 PyrD type B subunits. It depends on FMN as a cofactor.

The protein localises to the cytoplasm. The catalysed reaction is (S)-dihydroorotate + NAD(+) = orotate + NADH + H(+). Its pathway is pyrimidine metabolism; UMP biosynthesis via de novo pathway; orotate from (S)-dihydroorotate (NAD(+) route): step 1/1. Functionally, catalyzes the conversion of dihydroorotate to orotate with NAD(+) as electron acceptor. The protein is Dihydroorotate dehydrogenase B (NAD(+)), catalytic subunit (pyrD) of Methanocella arvoryzae (strain DSM 22066 / NBRC 105507 / MRE50).